The sequence spans 1105 residues: Pheromone-regulated membrane protein 10 (1105 aa).

The segment covering 1 to 11 (MSDNRPTYDTS) has biased composition (polar residues). 6 disordered regions span residues 1-22 (MSDN…NHFH), 36-55 (RKQN…TASN), 65-123 (GSNH…FYGD), 151-278 (IKPK…GGGL), 385-473 (AGAS…FLRG), and 520-656 (EQKS…LRHK). Over residues 67 to 82 (NHKFGNSINNNNNNAN) the composition is skewed to low complexity. A compositionally biased stretch (polar residues) spans 85 to 106 (LGSSSAGTNRRSLISPTSSTHV). Residues 162-178 (DSSDDDGNNLDEVEDET) show a composition bias toward acidic residues. A compositionally biased stretch (polar residues) spans 185–197 (LNQNHPPQQYYET). Residues 198 to 210 (DSSDEDEEDDDEV) are compositionally biased toward acidic residues. Residues 390–413 (LDHSQQSSAAPSTEITPSQSPNQH) show a composition bias toward polar residues. Over residues 417-439 (EKSNNNENNQQSTTVESSSSTSS) the composition is skewed to low complexity. Residues 446–459 (LARRRASEERKKAE) are compositionally biased toward basic and acidic residues. Composition is skewed to polar residues over residues 520 to 539 (EQKS…GTAL), 592 to 606 (RTNT…NSEE), and 624 to 633 (MNANLPSFQN). Helical transmembrane passes span 782 to 802 (PPWL…PFAF), 809 to 829 (LPIS…VSSI), 835 to 855 (SVFE…IGSI), 860 to 880 (LFCF…GYII), 903 to 923 (VIYS…YGWI), 938 to 958 (AIDE…LGLI), 963 to 983 (WSQV…SFFA), 986 to 1006 (HFST…GVLG), 1015 to 1035 (GMAV…GIAS), and 1075 to 1095 (VEVS…IYPF).

The protein belongs to the ThrE exporter (TC 2.A.79) family.

It is found in the membrane. The polypeptide is Pheromone-regulated membrane protein 10 (PRM10) (Candida albicans (strain SC5314 / ATCC MYA-2876) (Yeast)).